Consider the following 210-residue polypeptide: Synaptosomal-associated protein 23 (210 aa).

N-acetylmethionine is present on methionine 1. Phosphoserine occurs at positions 5, 20, 23, and 34. Positions 14–76 constitute a t-SNARE coiled-coil homology 1 domain; sequence HQVTDESLES…REAEKTLTEL (63 aa). The stretch at 23–76 forms a coiled coil; sequence STRRILGLAIESQDAGIKTITMLDEQGEQLNRIEEGMDQINKDMREAEKTLTEL. 5 S-palmitoyl cysteine lipidation sites follow: cysteine 79, cysteine 80, cysteine 83, cysteine 85, and cysteine 87. Positions 104 to 136 are disordered; the sequence is GDGGDSSPSNVVSKQPSRITNGQPQQTTGAASG. Positions 109 to 133 are enriched in polar residues; that stretch reads SSPSNVVSKQPSRITNGQPQQTTGA. Phosphoserine occurs at positions 110 and 160. The 63-residue stretch at 145–207 folds into the t-SNARE coiled-coil homology 2 domain; the sequence is DAREDEMEEN…DIANTRAKKL (63 aa).

The protein belongs to the SNAP-25 family. Homotetramer (via coiled-coil domain), also forms heterotetramers with STX4 and VAMP3. Found in a complex with VAMP8 and STX1A. Found in a complex with VAMP8 and STX4 in pancreas. Interacts simultaneously with SNAPIN and SYN4. Interacts with STX1A. Interacts with STX12. Interacts tightly to multiple syntaxins and synaptobrevins/VAMPs. Interacts with ZDHHC13 (via ANK repeats). Interacts with ZDHHC17 (via ANK repeats).

It localises to the cell membrane. Its subcellular location is the synapse. The protein resides in the synaptosome. It is found in the cytoplasmic vesicle membrane. Its function is as follows. Essential component of the high affinity receptor for the general membrane fusion machinery and an important regulator of transport vesicle docking and fusion. In Rattus norvegicus (Rat), this protein is Synaptosomal-associated protein 23 (Snap23).